A 169-amino-acid chain; its full sequence is UPF0065 protein in clcB-clcD intergenic region (169 aa).

Belongs to the UPF0065 (bug) family.

The protein localises to the periplasm. The protein is UPF0065 protein in clcB-clcD intergenic region of Pseudomonas knackmussii (strain DSM 6978 / CCUG 54928 / LMG 23759 / B13).